A 283-amino-acid chain; its full sequence is ATP synthase gamma chain (283 aa).

This sequence belongs to the ATPase gamma chain family. In terms of assembly, F-type ATPases have 2 components, CF(1) - the catalytic core - and CF(0) - the membrane proton channel. CF(1) has five subunits: alpha(3), beta(3), gamma(1), delta(1), epsilon(1). CF(0) has three main subunits: a, b and c.

The protein localises to the cell membrane. Its function is as follows. Produces ATP from ADP in the presence of a proton gradient across the membrane. The gamma chain is believed to be important in regulating ATPase activity and the flow of protons through the CF(0) complex. This is ATP synthase gamma chain from Clostridium beijerinckii (strain ATCC 51743 / NCIMB 8052) (Clostridium acetobutylicum).